Here is a 240-residue protein sequence, read N- to C-terminus: tRNA1(Val) (adenine(37)-N6)-methyltransferase (240 aa).

It belongs to the methyltransferase superfamily. tRNA (adenine-N(6)-)-methyltransferase family.

The protein resides in the cytoplasm. It carries out the reaction adenosine(37) in tRNA1(Val) + S-adenosyl-L-methionine = N(6)-methyladenosine(37) in tRNA1(Val) + S-adenosyl-L-homocysteine + H(+). Specifically methylates the adenine in position 37 of tRNA(1)(Val) (anticodon cmo5UAC). The polypeptide is tRNA1(Val) (adenine(37)-N6)-methyltransferase (Vibrio cholerae serotype O1 (strain ATCC 39315 / El Tor Inaba N16961)).